The chain runs to 228 residues: UPF0502 protein AZOSEA09860 (228 aa).

This sequence belongs to the UPF0502 family.

This Aromatoleum aromaticum (strain DSM 19018 / LMG 30748 / EbN1) (Azoarcus sp. (strain EbN1)) protein is UPF0502 protein AZOSEA09860.